A 591-amino-acid polypeptide reads, in one-letter code: Transcriptional regulator PUL4 (591 aa).

Positions 3–29 form a DNA-binding region, zn(2)-C6 fungal-type; that stretch reads CLECKKRKQKCDGQKPCRRCTKLNVKC.

It localises to the nucleus. Transcription factor involved in regulation of the PUL gene cluster that mediates the formation of pulcherrimin, a red iron-containing pigment composed of two cyclized and modified leucine molecules that acts as a siderophore, a chelator that binds iron outside the cell for subsequent uptake. The protein is Transcriptional regulator PUL4 of Kluyveromyces lactis (strain ATCC 8585 / CBS 2359 / DSM 70799 / NBRC 1267 / NRRL Y-1140 / WM37) (Yeast).